The following is a 308-amino-acid chain: Dioxygenase peniF (308 aa).

His144 and His225 together coordinate Fe cation.

Belongs to the PhyH family. In terms of assembly, homodimer. The cofactor is Fe cation.

Functionally, dioxygenase; part of the gene cluster that mediates the biosynthesis of penifulvin A, a potent insecticidal sesquiterpene that features a [5.5.5.6]dioxafenestrane ring. The first step of the pathway is performed by the sesquiterpene cyclase peniA that generates the angular triquinane scaffold silphinene via cyclization of the linear farnesyl pyrophosphate (FPP). The cytochrome P450 monooxygenase peniB and the flavin-dependent monooxygenase peniC then catalyze a series of oxidation reactions to transform silphinene into penifulvin A. The dioxygenases peniD and peniF, as well as the acetyltransferase peniE, do not seem to be involved in the biosynthesis of penifulvin A. This Penicillium patulum (Penicillium griseofulvum) protein is Dioxygenase peniF.